Reading from the N-terminus, the 177-residue chain is Large ribosomal subunit protein uL6 (177 aa).

Belongs to the universal ribosomal protein uL6 family. As to quaternary structure, part of the 50S ribosomal subunit.

In terms of biological role, this protein binds to the 23S rRNA, and is important in its secondary structure. It is located near the subunit interface in the base of the L7/L12 stalk, and near the tRNA binding site of the peptidyltransferase center. The sequence is that of Large ribosomal subunit protein uL6 from Methanothermobacter thermautotrophicus (strain ATCC 29096 / DSM 1053 / JCM 10044 / NBRC 100330 / Delta H) (Methanobacterium thermoautotrophicum).